Reading from the N-terminus, the 717-residue chain is Polyribonucleotide nucleotidyltransferase (717 aa).

Residues Asp-495 and Asp-501 each contribute to the Mg(2+) site. Residues 562–624 (PRMIMIQIPK…TALDSALSQI (63 aa)) form the KH domain. Positions 634 to 703 (GEVYEGKVKS…KTGKYRLSRK (70 aa)) constitute an S1 motif domain.

This sequence belongs to the polyribonucleotide nucleotidyltransferase family. Mg(2+) serves as cofactor.

It is found in the cytoplasm. The catalysed reaction is RNA(n+1) + phosphate = RNA(n) + a ribonucleoside 5'-diphosphate. Involved in mRNA degradation. Catalyzes the phosphorolysis of single-stranded polyribonucleotides processively in the 3'- to 5'-direction. This Cytophaga hutchinsonii (strain ATCC 33406 / DSM 1761 / CIP 103989 / NBRC 15051 / NCIMB 9469 / D465) protein is Polyribonucleotide nucleotidyltransferase.